Reading from the N-terminus, the 533-residue chain is Adenine deaminase (533 aa).

This sequence belongs to the metallo-dependent hydrolases superfamily. Adenine deaminase family. Mn(2+) serves as cofactor.

It carries out the reaction adenine + H2O + H(+) = hypoxanthine + NH4(+). The protein is Adenine deaminase of Sulfurovum sp. (strain NBC37-1).